The following is a 527-amino-acid chain: Peptide chain release factor 3 (527 aa).

The tr-type G domain maps to 10 to 278; it reads DRRRTFAIIS…TFVENAPAPL (269 aa). Residues 19-26, 87-91, and 141-144 contribute to the GTP site; these read SHPDAGKT, DTPGH, and NKLD.

Belongs to the TRAFAC class translation factor GTPase superfamily. Classic translation factor GTPase family. PrfC subfamily.

Its subcellular location is the cytoplasm. In terms of biological role, increases the formation of ribosomal termination complexes and stimulates activities of RF-1 and RF-2. It binds guanine nucleotides and has strong preference for UGA stop codons. It may interact directly with the ribosome. The stimulation of RF-1 and RF-2 is significantly reduced by GTP and GDP, but not by GMP. The polypeptide is Peptide chain release factor 3 (Geobacter metallireducens (strain ATCC 53774 / DSM 7210 / GS-15)).